We begin with the raw amino-acid sequence, 380 residues long: Chaperone protein DnaJ (380 aa).

The region spanning 4–69 (DYYEILGVTR…QKRAAYDRFG (66 aa)) is the J domain. The CR-type zinc-finger motif lies at 135–213 (GKTAQINIPS…CQGTRRVEKN (79 aa)). C148, C151, C165, C168, C187, C190, C201, and C204 together coordinate Zn(2+). CXXCXGXG motif repeat units follow at residues 148–155 (CDSCEGSG), 165–172 (CGTCHGAG), 187–194 (CHACNGRG), and 201–208 (CPKCQGTR).

Belongs to the DnaJ family. Homodimer. The cofactor is Zn(2+).

It localises to the cytoplasm. Its function is as follows. Participates actively in the response to hyperosmotic and heat shock by preventing the aggregation of stress-denatured proteins and by disaggregating proteins, also in an autonomous, DnaK-independent fashion. Unfolded proteins bind initially to DnaJ; upon interaction with the DnaJ-bound protein, DnaK hydrolyzes its bound ATP, resulting in the formation of a stable complex. GrpE releases ADP from DnaK; ATP binding to DnaK triggers the release of the substrate protein, thus completing the reaction cycle. Several rounds of ATP-dependent interactions between DnaJ, DnaK and GrpE are required for fully efficient folding. Also involved, together with DnaK and GrpE, in the DNA replication of plasmids through activation of initiation proteins. The polypeptide is Chaperone protein DnaJ (Bartonella quintana (strain Toulouse) (Rochalimaea quintana)).